The sequence spans 250 residues: 1-(5-phosphoribosyl)-5-[(5-phosphoribosylamino)methylideneamino] imidazole-4-carboxamide isomerase (250 aa).

Residue Asp8 is the Proton acceptor of the active site. Residue Asp131 is the Proton donor of the active site.

Belongs to the HisA/HisF family.

Its subcellular location is the cytoplasm. It catalyses the reaction 1-(5-phospho-beta-D-ribosyl)-5-[(5-phospho-beta-D-ribosylamino)methylideneamino]imidazole-4-carboxamide = 5-[(5-phospho-1-deoxy-D-ribulos-1-ylimino)methylamino]-1-(5-phospho-beta-D-ribosyl)imidazole-4-carboxamide. It participates in amino-acid biosynthesis; L-histidine biosynthesis; L-histidine from 5-phospho-alpha-D-ribose 1-diphosphate: step 4/9. The protein is 1-(5-phosphoribosyl)-5-[(5-phosphoribosylamino)methylideneamino] imidazole-4-carboxamide isomerase of Paraburkholderia xenovorans (strain LB400).